The sequence spans 394 residues: Formate-dependent phosphoribosylglycinamide formyltransferase (394 aa).

N(1)-(5-phospho-beta-D-ribosyl)glycinamide contacts are provided by residues 21–22 and E81; that span reads EL. Residues R113, K154, 159-164, 194-197, and E202 each bind ATP; these read SSGKGQ and EEFI. Residues 118–307 enclose the ATP-grasp domain; the sequence is RLAAEELGLP…QFELHVRAIL (190 aa). E266 and E278 together coordinate Mg(2+). Residues D285, K355, and 362–363 each bind N(1)-(5-phospho-beta-D-ribosyl)glycinamide; that span reads RR.

It belongs to the PurK/PurT family. As to quaternary structure, homodimer.

It carries out the reaction N(1)-(5-phospho-beta-D-ribosyl)glycinamide + formate + ATP = N(2)-formyl-N(1)-(5-phospho-beta-D-ribosyl)glycinamide + ADP + phosphate + H(+). The protein operates within purine metabolism; IMP biosynthesis via de novo pathway; N(2)-formyl-N(1)-(5-phospho-D-ribosyl)glycinamide from N(1)-(5-phospho-D-ribosyl)glycinamide (formate route): step 1/1. Its function is as follows. Involved in the de novo purine biosynthesis. Catalyzes the transfer of formate to 5-phospho-ribosyl-glycinamide (GAR), producing 5-phospho-ribosyl-N-formylglycinamide (FGAR). Formate is provided by PurU via hydrolysis of 10-formyl-tetrahydrofolate. The protein is Formate-dependent phosphoribosylglycinamide formyltransferase of Pelobacter propionicus (strain DSM 2379 / NBRC 103807 / OttBd1).